The following is a 407-amino-acid chain: L-cysteine:1D-myo-inositol 2-amino-2-deoxy-alpha-D-glucopyranoside ligase (407 aa).

A disordered region spans residues 1–22; the sequence is MRSWSAPDIVPLPGTGGPLRVH. Cys43 is a Zn(2+) binding site. L-cysteinyl-5'-AMP contacts are provided by residues 43–46, Thr58, and 81–83; these read CGIT and NTT. The 'HIGH' region motif lies at 45–55; that stretch reads ITPYDAAHLGH. Residues 183-188 carry the 'ERGGDP' region motif; it reads ERGGDP. L-cysteinyl-5'-AMP is bound at residue Trp223. A Zn(2+)-binding site is contributed by Cys227. 245–247 contacts L-cysteinyl-5'-AMP; that stretch reads GSD. Residue His252 coordinates Zn(2+). Val278 contacts L-cysteinyl-5'-AMP. Positions 284–288 match the 'KMSKS' region motif; it reads KMSKS.

Belongs to the class-I aminoacyl-tRNA synthetase family. MshC subfamily. As to quaternary structure, monomer. Requires Zn(2+) as cofactor.

It catalyses the reaction 1D-myo-inositol 2-amino-2-deoxy-alpha-D-glucopyranoside + L-cysteine + ATP = 1D-myo-inositol 2-(L-cysteinylamino)-2-deoxy-alpha-D-glucopyranoside + AMP + diphosphate + H(+). Functionally, catalyzes the ATP-dependent condensation of GlcN-Ins and L-cysteine to form L-Cys-GlcN-Ins. The polypeptide is L-cysteine:1D-myo-inositol 2-amino-2-deoxy-alpha-D-glucopyranoside ligase (Nocardiopsis dassonvillei (strain ATCC 23218 / DSM 43111 / CIP 107115 / JCM 7437 / KCTC 9190 / NBRC 14626 / NCTC 10488 / NRRL B-5397 / IMRU 509) (Actinomadura dassonvillei)).